The primary structure comprises 507 residues: AMP phosphorylase (507 aa).

AMP is bound by residues Gly-168, 194–199 (SRAITG), and Thr-203. The Proton donor role is filled by Asp-256. 2 residues coordinate AMP: Ser-264 and Lys-288.

Belongs to the thymidine/pyrimidine-nucleoside phosphorylase family. Type 2 subfamily.

It carries out the reaction AMP + phosphate = alpha-D-ribose 1,5-bisphosphate + adenine. The catalysed reaction is CMP + phosphate = cytosine + alpha-D-ribose 1,5-bisphosphate. The enzyme catalyses UMP + phosphate = alpha-D-ribose 1,5-bisphosphate + uracil. In terms of biological role, catalyzes the conversion of AMP and phosphate to adenine and ribose 1,5-bisphosphate (R15P). Exhibits phosphorylase activity toward CMP and UMP in addition to AMP. Functions in an archaeal AMP degradation pathway, together with R15P isomerase and RubisCO. The polypeptide is AMP phosphorylase (Methanosarcina mazei (strain ATCC BAA-159 / DSM 3647 / Goe1 / Go1 / JCM 11833 / OCM 88) (Methanosarcina frisia)).